The chain runs to 420 residues: Sodium-dependent phosphate transport protein 4 (420 aa).

The disordered stretch occupies residues 1 to 21 (MATKTELSPTARESKNAQDMQ). Residues N49, N60, N68, and N77 are each glycosylated (N-linked (GlcNAc...) asparagine). A run of 8 helical transmembrane segments spans residues 126–146 (SIALSGMLLGCFTAILIGGFI), 154–174 (FVFYIFGGVGCVCCLLWFVVI), 218–238 (IWSICLGCFSHQWLVSTMVVY), 256–276 (LLSALPFIVAWVIGMVGGYLA), 292–314 (IATILGSLPSSALIVSLPYLNSG), 319–341 (TALLTLSCGLSTLCQSGIYINVL), 357–377 (GFSSIAPVIVPTVSGFLLSQD), and 385–405 (VFFLLFAVNLLGLLFYLIFGE).

Belongs to the major facilitator superfamily. Sodium/anion cotransporter family. As to expression, expressed in the liver and kidney. It is detected in proximal tubules in renal cortex as well as some tubules and glomeruli, with highest expression at the apical side of proximal tubules (at protein level).

The protein localises to the endoplasmic reticulum membrane. It is found in the cell membrane. The catalysed reaction is urate(in) + Na(+)(out) = urate(out) + Na(+)(in). Functionally, transports organic anions in a voltage-driven, multispecific, manner, on the apical side of renal proximal tubule. In particular, participates in the secretion of urate from the cell into the lumen. Urate is the end product of purine metabolism. May have roles in the metabolism and secretion of estrone sulfate, estradiol-17-beta-glucuronide, ochratoxin A, as wells as drugs such as bumetanide. The protein is Sodium-dependent phosphate transport protein 4 (SLC17A3) of Homo sapiens (Human).